The following is a 150-amino-acid chain: MKVSRHAKILEIINSKDIDTQEELAEELKKMGMNVTQATVSRDIKELKLIKVLGNTGKYKYATINHTESYMSDKLISIFAQTVISVENIDKLIIIKTISGSAPGAGEAIDTLGFDGIAGTIAGDNTIFAMTRTNEKAQEITLKLKKIINA.

This sequence belongs to the ArgR family.

Its subcellular location is the cytoplasm. It functions in the pathway amino-acid biosynthesis; L-arginine biosynthesis [regulation]. In terms of biological role, regulates arginine biosynthesis genes. The chain is Arginine repressor from Clostridium botulinum (strain 657 / Type Ba4).